The primary structure comprises 156 residues: Small ribosomal subunit protein uS7 (156 aa).

Belongs to the universal ribosomal protein uS7 family. Part of the 30S ribosomal subunit. Contacts proteins S9 and S11.

One of the primary rRNA binding proteins, it binds directly to 16S rRNA where it nucleates assembly of the head domain of the 30S subunit. Is located at the subunit interface close to the decoding center, probably blocks exit of the E-site tRNA. The polypeptide is Small ribosomal subunit protein uS7 (Thiobacillus denitrificans (strain ATCC 25259 / T1)).